Reading from the N-terminus, the 114-residue chain is Hydrogenase maturation factor HypA (114 aa).

His-2 provides a ligand contact to Ni(2+). Residues Cys-73, Cys-76, Cys-89, and Cys-92 each contribute to the Zn(2+) site.

Belongs to the HypA/HybF family.

Involved in the maturation of [NiFe] hydrogenases. Required for nickel insertion into the metal center of the hydrogenase. This is Hydrogenase maturation factor HypA from Caldanaerobacter subterraneus subsp. tengcongensis (strain DSM 15242 / JCM 11007 / NBRC 100824 / MB4) (Thermoanaerobacter tengcongensis).